Consider the following 81-residue polypeptide: Putative membrane protein insertion efficiency factor (81 aa).

It belongs to the UPF0161 family.

The protein resides in the cell inner membrane. Functionally, could be involved in insertion of integral membrane proteins into the membrane. In Pseudomonas savastanoi pv. phaseolicola (strain 1448A / Race 6) (Pseudomonas syringae pv. phaseolicola (strain 1448A / Race 6)), this protein is Putative membrane protein insertion efficiency factor.